A 579-amino-acid chain; its full sequence is Pentatricopeptide repeat-containing protein At2g15690, mitochondrial (579 aa).

Residues 1–49 (MSSLMAIRCARTQNIVTIGSLLQLRSSFPRLSSQFHFSGTLNSIPIKHL) constitute a mitochondrion transit peptide. Polar residues-rich tracts occupy residues 56–71 (NDYHQNPQSGSPSQHQ) and 78–103 (SFDSQNQTNTNQRVPQSPNQWSTQHG). The disordered stretch occupies residues 56 to 208 (NDYHQNPQSG…QMNEVAPPPS (153 aa)). 2 stretches are compositionally biased toward low complexity: residues 117–136 (GGQRPPYGGQNPQQGGQMSQ) and 148–199 (RPQY…SPNQ). PPR repeat units follow at residues 235 to 269 (DRECFVLLFESCANLKSLEHSKKVHDHFLQSKFRG), 270 to 300 (DPKLNNMVISMFGECSSITDAKRVFDHMVDK), 301 to 335 (DMDSWHLMMCAYSDNGMGDDALHLFEEMTKHGLKP), 336 to 371 (NEETFLTVFLACATVGGIEEAFLHFDSMKNEHGISP), and 372 to 402 (KTEHYLGVLGVLGKCGHLVEAEQYIRDLPFE). The type DYW motif stretch occupies residues 485 to 579 (GVVYVPDTRF…DGKCSCGDYW (95 aa)).

The protein belongs to the PPR family. PCMP-H subfamily.

It localises to the mitochondrion. The sequence is that of Pentatricopeptide repeat-containing protein At2g15690, mitochondrial (PCMP-H66) from Arabidopsis thaliana (Mouse-ear cress).